The primary structure comprises 83 residues: MACKVKAELEAAFKKLDANGDGYVTALELQTFMVTLDAYKALSKDKVKEASAKLIKMADKNSDGKISKEEFLNANAELLCQLK.

2 EF-hand domains span residues 4-39 (KVKA…LDAY) and 46-81 (KVKE…LLCQ). Ca(2+) is bound by residues Asp17, Asn19, Asp21, Tyr23, Glu28, Asp59, Asn61, Asp63, Lys65, and Glu70.

In terms of tissue distribution, selectively expressed in a small group of neurons.

It localises to the cytoplasm. Functionally, may function as a trigger protein which interacts with a larger protein. May mediate calcium-dependent signal transduction events in the growth cones and axons of a small group of sensory neurons which fasciculate in a single axon tract. The sequence is that of Calsensin from Haemopis marmorata (Green horse leech).